The sequence spans 693 residues: MARKIPLNRIRNIGIAAHIDAGKTTTTERILFYTGVSHKVGEVHDGAATMDWMEQEKERGITITSAATTCFWKDYQVNIIDTPGHVDFTIEVERSMRVLDGAVAVFCSVGGVQPQSETVWRQANKYGVPRMVFVNKMDRIGANFYNVESQISDRLKARPVPVVIPVGAEDTFKGVIDLLQMKALIWNDETMGAKYDIEEIPADLVEKANEYREKMIEAAAEQDEALMEKYLNGEELTTEEIKRGLKIGCHAMAIIPMLCGSSFKNKGVQTLLDAVIDYLPAPTEVADIHGVDAKDETKEISVQSSDEGEFAGLAFKIMTDPFVGQLTFVRVYRGSLESGSYVYNSTKGKKERVGRLLKMHANKREDIKEIYAGEICAFVGLKETLTGDTLCSEKEPVILERMEFPEPVISIAVEPKTKADQEKMGIALNKLAEEDPSFRVNSDEETGQTIISGMGELHLEIIVDRMKREFKVEAEVGQPQVAFRETVRKAVNKECKYAKQSGGRGQYGHVFIKLEPQEAGKGYEFVNDISGGVIPKEYIPAVDKGIKEAMQSGVLAGYPVVDFKVTLYDGSYHDVDSSEMAFKIAGSMAFKDAAREASPVLLEPIMKVEVEVPEDYMGDVIGDLNRRRGQINSMGDRSGIKVINAFVPLAEMFGYSTDLRSATQGRGTYTMEFSHYGEVPGNISKEIIEKRKG.

The tr-type G domain occupies 8 to 283; the sequence is NRIRNIGIAA…AVIDYLPAPT (276 aa). Residues 17–24, 81–85, and 135–138 each bind GTP; these read AHIDAGKT, DTPGH, and NKMD.

The protein belongs to the TRAFAC class translation factor GTPase superfamily. Classic translation factor GTPase family. EF-G/EF-2 subfamily.

It localises to the cytoplasm. Catalyzes the GTP-dependent ribosomal translocation step during translation elongation. During this step, the ribosome changes from the pre-translocational (PRE) to the post-translocational (POST) state as the newly formed A-site-bound peptidyl-tRNA and P-site-bound deacylated tRNA move to the P and E sites, respectively. Catalyzes the coordinated movement of the two tRNA molecules, the mRNA and conformational changes in the ribosome. The polypeptide is Elongation factor G (Wolinella succinogenes (strain ATCC 29543 / DSM 1740 / CCUG 13145 / JCM 31913 / LMG 7466 / NCTC 11488 / FDC 602W) (Vibrio succinogenes)).